The sequence spans 171 residues: Small ribosomal subunit protein uS4 (171 aa).

Residues 101–165 form the S4 RNA-binding domain; the sequence is RRLQTVVYRK…SSLSDELHPE (65 aa). The segment at 148 to 171 is disordered; that stretch reads SSVGFDEHSSLSDELHPERAEAQE. Over residues 152–171 the composition is skewed to basic and acidic residues; it reads FDEHSSLSDELHPERAEAQE.

It belongs to the universal ribosomal protein uS4 family. In terms of assembly, part of the 30S ribosomal subunit. Contacts protein S5. The interaction surface between S4 and S5 is involved in control of translational fidelity.

Functionally, one of the primary rRNA binding proteins, it binds directly to 16S rRNA where it nucleates assembly of the body of the 30S subunit. Its function is as follows. With S5 and S12 plays an important role in translational accuracy. The sequence is that of Small ribosomal subunit protein uS4 from Haloarcula marismortui (strain ATCC 43049 / DSM 3752 / JCM 8966 / VKM B-1809) (Halobacterium marismortui).